A 495-amino-acid polypeptide reads, in one-letter code: Serine/threonine-protein phosphatase 2A regulatory subunit sur-6 (495 aa).

Residues 1–27 are disordered; that stretch reads MVMEVDEPAVAATTSQNQPQEHANDFD. Over residues 12–21 the composition is skewed to polar residues; sequence ATTSQNQPQE. WD repeat units follow at residues 64–103, 130–171, 215–253, 264–304, 323–361, and 378–419; these read TEADVISCVEFSHDGEYLATGDKGGRVVIFQRDQSGKYVK, EIDE…RKIG, AHTYHVNSISVNSDQETFLSADDLRVNLWNLEITNESFN, ELTE…LCDA, EIIASVSDVKFSHNGRYLLTRDYLTVKVWDLNMESQPVE, and ENDS…DAKT. The interval 439-459 is disordered; it reads SAKRKRNNLSSSGETTEEDLS. Residues 464-495 form a WD 7 repeat; sequence QFDRKILHTAWHPKDNIIALAATNNLYIFSDV.

This sequence belongs to the phosphatase 2A regulatory subunit B family. As to quaternary structure, part of a complex consisting of a common heterodimeric core enzyme, composed of catalytic subunit let-92 and constant regulatory subunit paa-1, that associates with a variety of regulatory subunits which confer distinct properties to the holoenzyme. Interacts with let-92.

Its subcellular location is the cytoplasm. Its function is as follows. Probable regulatory subunit of serine/threonine phosphatase let-92. Together with let-92 and constant regulatory subunit paa-1, positively regulates centriole duplication during early embryonic cell divisions by preventing the degradation of sas-5 and kinase zyg-1. In addition, during vulva development, may play a role with phosphatase let-92 and regulatory subunit paa-1 in the induction of vulva cell precursors by positively regulating let-60/Ras-MAP kinase signaling, probably by promoting lin-45 activation. In intestinal epithelial cells, may play a role in the late secretory pathway probably by regulating the exocyst, a protein complex involved in targeting secretory vesicles to the plasma membrane. The sequence is that of Serine/threonine-protein phosphatase 2A regulatory subunit sur-6 from Caenorhabditis elegans.